The primary structure comprises 517 residues: MYEQVVEYWYVVLPLVFILHKVFDMWHTRRLMKQLGAAPVTNQLHDNFFGIINGWKHLSSRKKVELKNIMIINLPIRKFQVWVHMLVPSLEQSSSSQKIRRNIKALLATQFSDFSLGKRHTLFKPLLGDGIFTLDGQGWKHSRAMLRPQFAREQVAHVTSLEPHFQLLKKHMVKNKGGFFDIQELFFRFTVDSATEFLFGESVHSLKDETIGSYQDDIDFVGRKDFAESFNKAQEYLAIRTLVQDFYYLVNNQEFRDCNKLVHKFTNYYVQRALDATPEELEKQSGYVFLYELVKQTRGPNVLRDQSLNILLAGRDTSAGLLSFAVFELARNPHIWAKLREDVESQFGLGEQSRIEEITFESLKRCGYLKAFLNETLRVYPSVPRNFRIATKNTTLPRGGGSDGNSPVLVKKGEAVSYGINSTHLDPVYYGDDAAEFRPERWNEPSTRKLGWAYLPFNGGPRICLGQQFALTEAGYVLVRLAQSFDTLELKPPVVYPPKRLTNLTMSLQDGTIVKID.

C464 provides a ligand contact to heme.

It belongs to the cytochrome P450 family. Requires heme as cofactor.

In terms of biological role, together with an NADPH cytochrome P450 the enzyme system catalyzes the terminal hydroxylation as the first step in the assimilation of alkanes and fatty acids. Preferentially hydroxylates lauric acid. In Candida tropicalis (Yeast), this protein is Cytochrome P450 52A8 (CYP52A8).